The sequence spans 489 residues: Cysteine--tRNA ligase (489 aa).

C27 is a binding site for Zn(2+). Residues 29–39 (VTVYDLCHLGH) carry the 'HIGH' region motif. Residues C211, H236, and E240 each contribute to the Zn(2+) site. The 'KMSKS' region motif lies at 268-272 (KMSKS). K271 provides a ligand contact to ATP.

This sequence belongs to the class-I aminoacyl-tRNA synthetase family. As to quaternary structure, monomer. The cofactor is Zn(2+).

It is found in the cytoplasm. The enzyme catalyses tRNA(Cys) + L-cysteine + ATP = L-cysteinyl-tRNA(Cys) + AMP + diphosphate. The sequence is that of Cysteine--tRNA ligase from Prochlorococcus marinus (strain MIT 9215).